A 1458-amino-acid polypeptide reads, in one-letter code: Anaphase-promoting complex subunit 1 (1458 aa).

The segment at 186–210 (QSIKSSRNRRRESSFSREKNPDLTR) is disordered. The span at 196–210 (RESSFSREKNPDLTR) shows a compositional bias: basic and acidic residues. 4 PC repeats span residues 873 to 895 (GLLL…KLLS), 959 to 982 (AAGF…SDLK), 1006 to 1024 (GAIM…LEVA), and 1099 to 1124 (GICF…INFL).

It belongs to the APC1 family. As to quaternary structure, the APC/C is composed of at least 13 subunits: apc1, apc2, nuc2, apc4, apc5, cut9, apc8, apc10, apc11, hcn1, apc13, apc14 and apc15.

Its function is as follows. Component of the anaphase-promoting complex/cyclosome (APC/C), a cell cycle-regulated E3 ubiquitin-protein ligase complex that controls progression through mitosis and the G1 phase of the cell cycle. The APC/C is thought to confer substrate specificity and, in the presence of ubiquitin-conjugating E2 enzymes, it catalyzes the formation of protein-ubiquitin conjugates that are subsequently degraded by the 26S proteasome. Mutations to this protein prevent the exit from mitosis. The sequence is that of Anaphase-promoting complex subunit 1 (cut4) from Schizosaccharomyces pombe (strain 972 / ATCC 24843) (Fission yeast).